A 60-amino-acid polypeptide reads, in one-letter code: Large ribosomal subunit protein bL32 (60 aa).

The interval 1-25 is disordered; the sequence is MAVQQNKKSPSKRGMHRSHNALNVP. The segment covering 9–19 has biased composition (basic residues); the sequence is SPSKRGMHRSH.

The protein belongs to the bacterial ribosomal protein bL32 family.

In Polaromonas naphthalenivorans (strain CJ2), this protein is Large ribosomal subunit protein bL32.